We begin with the raw amino-acid sequence, 182 residues long: MYHGQKLAKLGRESHHRMLMLRTMVTQLIRHERIKTTLAKAKALRKEADRIITIAKRNTRLSHSLVYSYVTDKQVIPKLFKELRLRFGDRPGGYTRVLKAGSRLSDRSKMAYIEYVENDLVPLRDYKANNSKFAVIRKPTPQGTVFNFEEKETGKIYSSAISLNNRFKRLEQLKKQSTSSSN.

Belongs to the bacterial ribosomal protein bL17 family.

It localises to the mitochondrion. The protein is Large ribosomal subunit protein bL17m (mrpl17) of Dictyostelium discoideum (Social amoeba).